A 447-amino-acid polypeptide reads, in one-letter code: Argininosuccinate synthase (447 aa).

ATP contacts are provided by residues 17–25 (AFSGGLDTS) and A43. Residue Y99 coordinates L-citrulline. ATP is bound by residues G129 and T131. T131, N135, and D136 together coordinate L-aspartate. N135 lines the L-citrulline pocket. Residue D136 participates in ATP binding. The L-citrulline site is built by R139 and S192. D194 contributes to the ATP binding site. The L-citrulline site is built by T201, E203, and E280.

It belongs to the argininosuccinate synthase family. Type 2 subfamily. In terms of assembly, homotetramer.

The protein resides in the cytoplasm. It carries out the reaction L-citrulline + L-aspartate + ATP = 2-(N(omega)-L-arginino)succinate + AMP + diphosphate + H(+). It functions in the pathway amino-acid biosynthesis; L-arginine biosynthesis; L-arginine from L-ornithine and carbamoyl phosphate: step 2/3. The chain is Argininosuccinate synthase from Paracidovorax citrulli (strain AAC00-1) (Acidovorax citrulli).